The sequence spans 256 residues: uncharacterized protein (256 aa).

An N-terminal signal peptide occupies residues 1–22 (MNNFRQCALCIGTSVLILLVSG). A lipid anchor (N-palmitoyl cysteine) is attached at cysteine 23. A lipid anchor (S-diacylglycerol cysteine) is attached at cysteine 23.

It belongs to the staphylococcal tandem lipoprotein family.

It is found in the cell membrane. This is an uncharacterized protein from Staphylococcus aureus (strain bovine RF122 / ET3-1).